The chain runs to 203 residues: Eukaryotic translation initiation factor isoform 4E (203 aa).

The segment covering 1 to 25 (MATETAGAVVESSSAATVPSPAPEA) has biased composition (low complexity). Positions 1–27 (MATETAGAVVESSSAATVPSPAPEAGS) are disordered. MRNA contacts are provided by residues 47 to 52 (QGAAWG), Lys79, and 97 to 98 (WE). A disulfide bridge connects residues Cys102 and Cys141. An mRNA-binding site is contributed by 148–153 (RQRQDK).

It belongs to the eukaryotic initiation factor 4E family. EIF4F is a multi-subunit complex, the composition of which varies with external and internal environmental conditions. It is composed of at least EIF4A, EIF4E and EIF4G. EIF4E is also known to interact with other partners. In higher plants two isoforms of EIF4F have been identified, named isoform EIF4F and isoform EIF(iso)4F. Isoform EIF4F has subunits p220 and p26, whereas isoform EIF(iso)4F has subunits p82 and p28. As to quaternary structure, (Microbial infection) Interacts with the potyvirus peanut stripe virus (PStV) helper component proteinase (HC-Pro) in the cytoplasm and with PStV viral genome-linked protein (VPg) in the nucleus; these interactions are possible in susceptible hosts but impaired in resistant plants. According to the redox status, the Cys-102-Cys-141 disulfide bridge may have a role in regulating protein function by affecting its ability to bind capped mRNA. Expressed ubiquitously with highest levels in young leaves and roots, and lowest levels in flowers.

The protein resides in the cytoplasm. It localises to the nucleus. In terms of biological role, component of the protein complex eIF4F, which is involved in the recognition of the mRNA cap, ATP-dependent unwinding of 5'-terminal secondary structure and recruitment of mRNA to the ribosome. Recognizes and binds the 7-methylguanosine-containing mRNA cap during an early step in the initiation of protein synthesis and facilitates ribosome binding by inducing the unwinding of the mRNAs secondary structures. Key component of recessive resistance to potyviruses such as peanut stripe virus (PStV). Its function is as follows. (Microbial infection) Susceptibility host factor required for viral infection by recruiting viral RNAs to the host ribosomal complex via an interaction with viral genome-linked protein (VPg). The protein is Eukaryotic translation initiation factor isoform 4E of Arachis hypogaea (Peanut).